A 253-amino-acid chain; its full sequence is MMGDSVIYYVEQADEPVNRADERARKTFKYFWRELFWERRRIISALDFAMVKVPFFQDGEDGEICEHMWIDDIYFDGLYIYGVLNNEPGELTNVEQGESVCVPVDDISDWMFVCNGIPYGGFTIQAMRGQMTEEERTEHDAAWGIDFGDPGQILLVYEEKEHPENLEEHPMCRNCIDDFRQQLSQNSDYLREQDEDGYTPLHHEAIAGNALMVQAMLEYGANPASTTSEGYTALDFACLTGWQNVADLLEPRH.

ANK repeat units follow at residues 196 to 225 (DGYTPLHHEAIAGNALMVQAMLEYGANPAS) and 229 to 252 (EGYTALDFACLTGWQNVADLLEPR).

The sequence is that of Putative ankyrin repeat protein NMB1133/NMB1171 from Neisseria meningitidis serogroup B (strain ATCC BAA-335 / MC58).